Consider the following 84-residue polypeptide: Large ribosomal subunit protein bL27 (84 aa).

The segment at 1 to 25 (MAHKKAGGSSKNGRDSAGKRLGVKR) is disordered.

Belongs to the bacterial ribosomal protein bL27 family.

The chain is Large ribosomal subunit protein bL27 from Syntrophotalea carbinolica (strain DSM 2380 / NBRC 103641 / GraBd1) (Pelobacter carbinolicus).